Reading from the N-terminus, the 545-residue chain is Chromosomal replication initiator protein DnaA (545 aa).

Positions 1 to 72 (MNDFWQHCSA…DMARDFWQAP (72 aa)) are domain I, interacts with DnaA modulators. Residues 72–208 (PVDVQFVLDP…GETDSMYERS (137 aa)) are domain II. The span at 90 to 105 (AAAPAPASARPASAPG) shows a compositional bias: low complexity. 2 disordered regions span residues 90 to 112 (AAAPAPASARPASAPGSMGGSAG) and 181 to 204 (AAARRTWRPGQSASSNGNGETDSM). Polar residues predominate over residues 189–201 (PGQSASSNGNGET). A domain III, AAA+ region region spans residues 209-425 (KLNPVLTFDN…GALRKILAYS (217 aa)). Residues Gly253, Gly255, Lys256, and Thr257 each contribute to the ATP site. Residues 426 to 545 (KFHGREITIE…LHVLEQTLKG (120 aa)) are domain IV, binds dsDNA.

The protein belongs to the DnaA family. As to quaternary structure, oligomerizes as a right-handed, spiral filament on DNA at oriC.

Its subcellular location is the cytoplasm. Plays an essential role in the initiation and regulation of chromosomal replication. ATP-DnaA binds to the origin of replication (oriC) to initiate formation of the DNA replication initiation complex once per cell cycle. Binds the DnaA box (a 9 base pair repeat at the origin) and separates the double-stranded (ds)DNA. Forms a right-handed helical filament on oriC DNA; dsDNA binds to the exterior of the filament while single-stranded (ss)DNA is stabiized in the filament's interior. The ATP-DnaA-oriC complex binds and stabilizes one strand of the AT-rich DNA unwinding element (DUE), permitting loading of DNA polymerase. After initiation quickly degrades to an ADP-DnaA complex that is not apt for DNA replication. Binds acidic phospholipids. This chain is Chromosomal replication initiator protein DnaA, found in Paraburkholderia phytofirmans (strain DSM 17436 / LMG 22146 / PsJN) (Burkholderia phytofirmans).